A 485-amino-acid chain; its full sequence is Glycogen synthase (485 aa).

K17 is an ADP-alpha-D-glucose binding site.

The protein belongs to the glycosyltransferase 1 family. Bacterial/plant glycogen synthase subfamily.

The enzyme catalyses [(1-&gt;4)-alpha-D-glucosyl](n) + ADP-alpha-D-glucose = [(1-&gt;4)-alpha-D-glucosyl](n+1) + ADP + H(+). It participates in glycan biosynthesis; glycogen biosynthesis. In terms of biological role, synthesizes alpha-1,4-glucan chains using ADP-glucose. The sequence is that of Glycogen synthase from Novosphingobium aromaticivorans (strain ATCC 700278 / DSM 12444 / CCUG 56034 / CIP 105152 / NBRC 16084 / F199).